A 575-amino-acid polypeptide reads, in one-letter code: Phosphoenolpyruvate-protein phosphotransferase (575 aa).

His-191 functions as the Tele-phosphohistidine intermediate in the catalytic mechanism. Residues Arg-298 and Arg-334 each contribute to the phosphoenolpyruvate site. The Mg(2+) site is built by Glu-435 and Asp-459. Phosphoenolpyruvate contacts are provided by residues 458–459 and Arg-469; that span reads ND. Cys-506 serves as the catalytic Proton donor.

This sequence belongs to the PEP-utilizing enzyme family. Homodimer. The cofactor is Mg(2+).

Its subcellular location is the cytoplasm. It carries out the reaction L-histidyl-[protein] + phosphoenolpyruvate = N(pros)-phospho-L-histidyl-[protein] + pyruvate. Its function is as follows. General (non sugar-specific) component of the phosphoenolpyruvate-dependent sugar phosphotransferase system (sugar PTS). This major carbohydrate active-transport system catalyzes the phosphorylation of incoming sugar substrates concomitantly with their translocation across the cell membrane. Enzyme I transfers the phosphoryl group from phosphoenolpyruvate (PEP) to the phosphoryl carrier protein (HPr). The polypeptide is Phosphoenolpyruvate-protein phosphotransferase (ptsI) (Lactococcus lactis subsp. lactis (strain IL1403) (Streptococcus lactis)).